Here is a 356-residue protein sequence, read N- to C-terminus: Glutamine synthetase (356 aa).

In terms of domain architecture, GS beta-grasp spans 19–99; that stretch reads IIAEYIWIGG…VMCDCYTPRG (81 aa). Residues 106–356 enclose the GS catalytic domain; the sequence is KRYNAAKILS…IAQTTILWKP (251 aa).

This sequence belongs to the glutamine synthetase family. In terms of assembly, homooctamer.

The protein localises to the cytoplasm. The enzyme catalyses L-glutamate + NH4(+) + ATP = L-glutamine + ADP + phosphate + H(+). The sequence is that of Glutamine synthetase from Hordeum vulgare (Barley).